A 288-amino-acid polypeptide reads, in one-letter code: Serine/threonine-protein acetyltransferase YopJ (288 aa).

Active-site residues include His109 and Glu128. His109 contacts CoA. Residue 167–168 (RS) coordinates CoA. Cys172 is an active-site residue. Residues 182 to 185 (KLYI) and 224 to 225 (KH) contribute to the 1D-myo-inositol hexakisphosphate site. 227 to 230 (QGKK) is a binding site for CoA. 1D-myo-inositol hexakisphosphate is bound at residue Arg257. 266–270 (DGKEL) is a binding site for CoA.

Belongs to the acetyltransferase YopJ family. 1D-myo-inositol hexakisphosphate serves as cofactor.

It is found in the secreted. It carries out the reaction L-threonyl-[protein] + acetyl-CoA = O-acetyl-L-threonyl-[protein] + CoA. It catalyses the reaction L-seryl-[protein] + acetyl-CoA = O-acetyl-L-seryl-[protein] + CoA. Its activity is regulated as follows. 1D-myo-inositol hexakisphosphate activates protein-acetyltransferase activity via an allosteric mechanism: 1D-myo-inositol hexakisphosphate-binding induces a conformational rearrangement that stimulates the interaction with acetyl-CoA. Its function is as follows. Serine/threonine-protein acetyltransferase translocated into infected cells, which inhibits the host immune response and induces cell death by mediating acetylation of target proteins. Inhibits the MAPK and NF-kappa-B signaling pathways by acetylating protein-kinases such as MAP2K1, MAP2K6, MAP3K7/TAK1 and I-kappa-B kinase (CHUK/IKKA and IKBKB) on serine and threonine residues critical for their activation by phosphorylation, thereby preventing protein-kinase activation. Promotes pyroptosis, a programmed cell death, in host cells by mediating acetylation of MAP3K7/TAK1: MAP3K7/TAK1 inactivation triggers activation of caspase-8 (CASP8), followed by CASP8-dependent cleavage of gasdermin-D (GSDMD) and induction of pyroptosis. This is Serine/threonine-protein acetyltransferase YopJ from Yersinia pestis.